Consider the following 267-residue polypeptide: tRNA pseudouridine synthase A (267 aa).

Residue Asp-55 is the Nucleophile of the active site. Position 109 (Tyr-109) interacts with substrate.

Belongs to the tRNA pseudouridine synthase TruA family.

It carries out the reaction uridine(38/39/40) in tRNA = pseudouridine(38/39/40) in tRNA. Functionally, formation of pseudouridine at positions 38, 39 and 40 in the anticodon stem and loop of transfer RNAs. The polypeptide is tRNA pseudouridine synthase A (Natronomonas pharaonis (strain ATCC 35678 / DSM 2160 / CIP 103997 / JCM 8858 / NBRC 14720 / NCIMB 2260 / Gabara) (Halobacterium pharaonis)).